A 90-amino-acid polypeptide reads, in one-letter code: Small ribosomal subunit protein uS15c (90 aa).

Belongs to the universal ribosomal protein uS15 family. Part of the 30S ribosomal subunit.

The protein localises to the plastid. The protein resides in the chloroplast. This Pelargonium hortorum (Common geranium) protein is Small ribosomal subunit protein uS15c (rps15-A).